Consider the following 1087-residue polypeptide: DYRK-family kinase pom1 (1087 aa).

Disordered stretches follow at residues 57–81, 120–182, 238–308, and 336–578; these read CPNRQSSSSTAADTSPSTNASNTNI, LLRS…SKSF, MAPK…LSTI, and NHSH…PSLS. Positions 62 to 81 are enriched in low complexity; that stretch reads SSSSTAADTSPSTNASNTNI. Polar residues-rich tracts occupy residues 132–165 and 246–256; these read KNSPRNSIHRLSNISIGNNPIDFESSQQNNPSSL and WRHTNFHSTSH. The span at 292–307 shows a compositional bias: low complexity; sequence SGSLTKSSSESKNLST. The span at 336–361 shows a compositional bias: polar residues; it reads NHSHVGSQTKSHSFATPSVFDNNKPV. Residues 362–373 show a composition bias toward low complexity; it reads SSDNHNNTTTSS. Residues 397 to 407 show a composition bias toward basic and acidic residues; sequence VDGHRNHEAKH. Residues 429 to 442 are compositionally biased toward low complexity; it reads RGGFFSRLSFSRSS. The span at 478–488 shows a compositional bias: basic residues; it reads NGKKTPTRTKS. Residue serine 513 is modified to Phosphoserine. Positions 527–536 are enriched in basic and acidic residues; it reads VSREPEKPEE. Residues 555-578 are compositionally biased toward polar residues; the sequence is QQRSVSYTPKRSSDTSESLQPSLS. The 297-residue stretch at 699-995 folds into the Protein kinase domain; sequence YEVVDFLGKG…PQQAAQHDFL (297 aa). ATP-binding positions include 705-713 and lysine 728; that span reads LGKGSFGQV. Aspartate 825 (proton acceptor) is an active-site residue. Disordered regions lie at residues 992-1011 and 1017-1056; these read HDFLTGKQDVRRPNTAPARQ and PNIETAPIPRPLPNLPMEYNDHTLPSPKEPSNQASNLVRS. Over residues 1045 to 1055 the composition is skewed to polar residues; it reads EPSNQASNLVR.

Belongs to the protein kinase superfamily. CMGC Ser/Thr protein kinase family. MNB/DYRK subfamily. Interacts with rga4. Interacts with tea4; this interaction triggers pom1 plasma membrane association. Post-translationally, autophosphorylates at the cell cortex to lower lipid affinity and promote membrane release. Dephosphorylation by dis2, regulated by tea4, triggers membrane association.

It is found in the cell tip. It localises to the cell membrane. It catalyses the reaction L-seryl-[protein] + ATP = O-phospho-L-seryl-[protein] + ADP + H(+). It carries out the reaction L-threonyl-[protein] + ATP = O-phospho-L-threonyl-[protein] + ADP + H(+). The enzyme catalyses L-tyrosyl-[protein] + ATP = O-phospho-L-tyrosyl-[protein] + ADP + H(+). Its function is as follows. Polarity factor involved in localization of polarized growth and cytokinesis. Forms an intracellular gradient that serves to measure cell length and control mitotic entry. Controls the timing of mitotic commitment by regulating the inhibitory impact of cdr1/cdr2 on wee1 activity. Directly phosphorylates the tail of cdr2 which inhibits cdr2 activation by ssp1. Cdr2 phosphorylation by pom1 also modulates cdr2 association with membranes and inhibits cdr2 interaction with mid1, reducing its clustering ability, possibly via the down-regulation of cdr2 kinase activity. Acts as a negative regulator of mid1 distribution, excluding mid1 from non-growing ends, which prevents division-septum assembly at the cell ends. The pom1 polar gradient also mediates mitotic entry by regulating cdk1. Plays an essential role in proper localization and phosphorylation of a GAP for cdc42, rga4, which ensures bipolar localization of GTP-bound, active cdc42 involved in F-actin formation. Phosphorylates multiple other substrates that function in polarized cell growth, including tea4, mod5, pal1, the Rho GAP rga7, and the Arf GEF syt22. This is DYRK-family kinase pom1 from Schizosaccharomyces pombe (strain 972 / ATCC 24843) (Fission yeast).